Consider the following 242-residue polypeptide: Uridylate kinase (242 aa).

ATP is bound at residue 12-15 (KLSG). The tract at residues 20-25 (GNDGFG) is involved in allosteric activation by GTP. Residue G54 participates in UMP binding. ATP is bound by residues G55 and R59. Residues D74 and 135 to 142 (TGNPYFST) contribute to the UMP site. Residues N163, Y169, and D172 each contribute to the ATP site.

It belongs to the UMP kinase family. As to quaternary structure, homohexamer.

The protein localises to the cytoplasm. It carries out the reaction UMP + ATP = UDP + ADP. The protein operates within pyrimidine metabolism; CTP biosynthesis via de novo pathway; UDP from UMP (UMPK route): step 1/1. Its activity is regulated as follows. Allosterically activated by GTP. Inhibited by UTP. Functionally, catalyzes the reversible phosphorylation of UMP to UDP. The chain is Uridylate kinase from Listeria innocua serovar 6a (strain ATCC BAA-680 / CLIP 11262).